We begin with the raw amino-acid sequence, 837 residues long: Vacuolar membrane protease (837 aa).

Residues 1–36 lie on the Cytoplasmic side of the membrane; it reads MSEEEVHDTSSEASEVFTNQPNAFVRGVRSIFGYRK. Residues 37 to 57 traverse the membrane as a helical segment; sequence TSLTLFVILTIVVTAGLSFYD. Residues 58 to 355 are Vacuolar-facing; it reads NSLELTIELP…FATPISALAR (298 aa). Asn143 is a glycosylation site (N-linked (GlcNAc...) asparagine). Zn(2+)-binding residues include His157 and Asp169. Glu201 serves as the catalytic Proton acceptor. The Zn(2+) site is built by Glu202, Glu227, and His299. Residues 356-376 traverse the membrane as a helical segment; that stretch reads VNLVLLVLFPVVSTPLLFVIV. Topologically, residues 377-384 are cytoplasmic; that stretch reads KYKKWKLR. The helical transmembrane segment at 385 to 405 threads the bilayer; the sequence is VTNFLGVPLAMGLAVAVGQVG. The Vacuolar segment spans residues 406–415; it reads NPMLVSSHPM. A helical transmembrane segment spans residues 416–436; that stretch reads MVVATTTSIVVLVYYVVLNGV. The Cytoplasmic segment spans residues 437-446; the sequence is DWVNTSSDQK. A helical transmembrane segment spans residues 447 to 467; sequence LVTMIEVSFVYWVVLVYVTWS. Residues 468 to 474 lie on the Vacuolar side of the membrane; that stretch reads GGDHTGE. A helical membrane pass occupies residues 475–495; it reads FGVTVLFFVQASTSLLGLIGW. The Cytoplasmic segment spans residues 496–539; sequence TFTRVRGGDEPLLSGEEERYGTEDERDTEKPLVEHNYDWSLQYL. A helical membrane pass occupies residues 540–560; sequence LIVPVSSLVVYNSGWLVLEGV. N-linked (GlcNAc...) asparagine glycosylation is present at Asn561. The Vacuolar segment spans residues 561–572; it reads NKTVQESLASEH. The helical transmembrane segment at 573 to 593 threads the bilayer; sequence LIYWIVVVFSQFLVLPVVPFI. The Cytoplasmic portion of the chain corresponds to 594-598; it reads TKFNR. Residues 599 to 619 traverse the membrane as a helical segment; it reads YIVLGLSVVVVVGVLMSMAVH. At 620–837 the chain is on the vacuolar side; that stretch reads PFNQGSPMKL…LVGVVKHVDV (218 aa). Residue Asn689 is glycosylated (N-linked (GlcNAc...) asparagine).

The protein belongs to the peptidase M28 family. The cofactor is Zn(2+).

It localises to the vacuole membrane. May be involved in vacuolar sorting and osmoregulation. The protein is Vacuolar membrane protease of Candida albicans (strain SC5314 / ATCC MYA-2876) (Yeast).